Here is a 122-residue protein sequence, read N- to C-terminus: Acidic phospholipase A2 (122 aa).

Intrachain disulfides connect Cys-26–Cys-115, Cys-28–Cys-44, Cys-43–Cys-95, Cys-49–Cys-122, Cys-50–Cys-88, Cys-57–Cys-81, and Cys-75–Cys-86. Residues Tyr-27, Gly-29, and Gly-31 each coordinate Ca(2+). His-47 is a catalytic residue. Asp-48 is a binding site for Ca(2+). Asp-89 is a catalytic residue.

May form tetramers. It depends on Ca(2+) as a cofactor. Expressed by the venom gland.

It localises to the secreted. It carries out the reaction a 1,2-diacyl-sn-glycero-3-phosphocholine + H2O = a 1-acyl-sn-glycero-3-phosphocholine + a fatty acid + H(+). Functionally, PLA2 catalyzes the calcium-dependent hydrolysis of the 2-acyl groups in 3-sn-phosphoglycerides. In vivo, is non-lethal to mice when intravenously injected up to a concentration of 30 ug, however does show significant edematogenic activity at the injection site. This is Acidic phospholipase A2 from Lachesis acrochorda (Chocoan bushmaster).